Here is a 768-residue protein sequence, read N- to C-terminus: DNA topoisomerase 4 subunit A (768 aa).

Residues 38–521 (LPEVSDGQKP…AGRAVLTQTA (484 aa)) enclose the Topo IIA-type catalytic domain. The active-site O-(5'-phospho-DNA)-tyrosine intermediate is Tyr126.

It belongs to the type II topoisomerase GyrA/ParC subunit family. ParC type 1 subfamily. Heterotetramer composed of ParC and ParE.

The protein localises to the cell membrane. The catalysed reaction is ATP-dependent breakage, passage and rejoining of double-stranded DNA.. Its function is as follows. Topoisomerase IV is essential for chromosome segregation. It relaxes supercoiled DNA. Performs the decatenation events required during the replication of a circular DNA molecule. This chain is DNA topoisomerase 4 subunit A, found in Neisseria gonorrhoeae.